The primary structure comprises 615 residues: Medium-chain acyl-CoA ligase ACSF2, mitochondrial (615 aa).

A mitochondrion-targeting transit peptide spans 1–41 (MAVYVGMLRLGRLCAGSSGVLGARVALSRSWQEARLQGVRF). Residue lysine 179 is modified to N6-acetyllysine. Lysine 182 bears the N6-acetyllysine; alternate mark. An N6-succinyllysine; alternate modification is found at lysine 182. 263 to 271 (TSGTTGSPK) is an ATP binding site. Lysine 340 and lysine 398 each carry N6-acetyllysine. The residue at position 478 (lysine 478) is an N6-succinyllysine. Residues aspartate 493 and arginine 508 each contribute to the ATP site. At lysine 510 the chain carries N6-acetyllysine. N6-acetyllysine; alternate is present on residues lysine 544 and lysine 570. 2 positions are modified to N6-succinyllysine; alternate: lysine 544 and lysine 570. ATP is bound at residue lysine 599. Lysine 599 is modified (N6-succinyllysine).

Belongs to the ATP-dependent AMP-binding enzyme family.

It is found in the mitochondrion. The enzyme catalyses a medium-chain fatty acid + ATP + CoA = a medium-chain fatty acyl-CoA + AMP + diphosphate. The catalysed reaction is octanoate + ATP + CoA = octanoyl-CoA + AMP + diphosphate. Functionally, acyl-CoA synthases catalyze the initial reaction in fatty acid metabolism, by forming a thioester with CoA. Has some preference toward medium-chain substrates. Plays a role in adipocyte differentiation. The protein is Medium-chain acyl-CoA ligase ACSF2, mitochondrial of Pongo abelii (Sumatran orangutan).